We begin with the raw amino-acid sequence, 125 residues long: Large ribosomal subunit protein bL20 (125 aa).

It belongs to the bacterial ribosomal protein bL20 family.

Its function is as follows. Binds directly to 23S ribosomal RNA and is necessary for the in vitro assembly process of the 50S ribosomal subunit. It is not involved in the protein synthesizing functions of that subunit. The chain is Large ribosomal subunit protein bL20 from Thermobifida fusca (strain YX).